We begin with the raw amino-acid sequence, 179 residues long: Large ribosomal subunit protein uL6 (179 aa).

Belongs to the universal ribosomal protein uL6 family. As to quaternary structure, part of the 50S ribosomal subunit.

This protein binds to the 23S rRNA, and is important in its secondary structure. It is located near the subunit interface in the base of the L7/L12 stalk, and near the tRNA binding site of the peptidyltransferase center. The sequence is that of Large ribosomal subunit protein uL6 from Synechococcus sp. (strain RCC307).